We begin with the raw amino-acid sequence, 283 residues long: tRNA pseudouridine synthase A (283 aa).

The Nucleophile role is filled by Asp-52. Substrate is bound at residue Tyr-148.

The protein belongs to the tRNA pseudouridine synthase TruA family. Homodimer.

It catalyses the reaction uridine(38/39/40) in tRNA = pseudouridine(38/39/40) in tRNA. Its function is as follows. Formation of pseudouridine at positions 38, 39 and 40 in the anticodon stem and loop of transfer RNAs. This chain is tRNA pseudouridine synthase A, found in Orientia tsutsugamushi (strain Ikeda) (Rickettsia tsutsugamushi).